We begin with the raw amino-acid sequence, 201 residues long: MEIEVIASKRELQGTGASRRLRHAGKVPGIVYGGSTAPVQIELDHNALYHALRKEAFHASVLSLSVDGAKESVLLRDAQWHPYKQQVLHVDFQRVDKDHKIHVKVPLHFLNAEVSPGVKLGGGKPHHIVNELDVQCFPGSLPEFIEVDMGALEVGHSIHANDLVLPAGVELVAHVKQENPAVAVIHAPKGGVEETPAAPAA.

The protein belongs to the bacterial ribosomal protein bL25 family. CTC subfamily. As to quaternary structure, part of the 50S ribosomal subunit; part of the 5S rRNA/L5/L18/L25 subcomplex. Contacts the 5S rRNA. Binds to the 5S rRNA independently of L5 and L18.

Functionally, this is one of the proteins that binds to the 5S RNA in the ribosome where it forms part of the central protuberance. In Thiobacillus denitrificans (strain ATCC 25259 / T1), this protein is Large ribosomal subunit protein bL25.